The sequence spans 298 residues: Inosose dehydratase (298 aa).

The protein belongs to the IolE/MocC family. Requires glutathione as cofactor. The cofactor is Co(2+). It depends on Mn(2+) as a cofactor.

The catalysed reaction is scyllo-inosose = 3D-3,5/4-trihydroxycyclohexane-1,2-dione + H2O. It participates in polyol metabolism; myo-inositol degradation into acetyl-CoA; acetyl-CoA from myo-inositol: step 2/7. Catalyzes the dehydration of inosose (2-keto-myo-inositol, 2KMI or 2,4,6/3,5-pentahydroxycyclohexanone) to 3D-(3,5/4)-trihydroxycyclohexane-1,2-dione (D-2,3-diketo-4-deoxy-epi-inositol). This Bacillus thuringiensis (strain Al Hakam) protein is Inosose dehydratase.